Consider the following 437-residue polypeptide: Zinc finger CCCH domain-containing protein 40 (437 aa).

A C3H1-type zinc finger spans residues 6-33 (MYKTKLCILFNKTGDCSRPNCTFAHGNA). Positions 35–107 (LRRPGESSFT…MPFENRRDKD (73 aa)) are disordered. Positions 48–85 (HNMDSDLRDRRHNMDSDLRDRLGRQFSPERRPSLDRSG) are enriched in basic and acidic residues. The stretch at 145–244 (NNVLEEQLKD…LGNQLSTYLA (100 aa)) forms a coiled coil. At S259 the chain carries Phosphoserine. 2 disordered regions span residues 266 to 360 (RNLR…RRRF) and 380 to 437 (EFDD…DDSV). The span at 307–319 (RGEEEKVENEKKR) shows a compositional bias: basic and acidic residues. 2 stretches are compositionally biased toward acidic residues: residues 333-343 (EEESGAWNDED) and 383-392 (DVAESEEENP). The segment covering 426-437 (MEQKKAYDDDSV) has biased composition (basic and acidic residues).

The polypeptide is Zinc finger CCCH domain-containing protein 40 (Arabidopsis thaliana (Mouse-ear cress)).